A 236-amino-acid chain; its full sequence is MATPHINAVEGAFAETVLFPGDPLRAKYIAETFLENVEQVTDVRNMLGFTGTYKGKRISVMGSGMGIPSCSIYATELIKDYGVKNLIRVGTCGAISTDVKVRDVIIGMGACTDSQVNRLRFKGQDFAAIANYELMNAVIESAKVKGTKIRVGNVFSADLFYTPDPQMFDVMEKMGVLGVEMEAAGLYGVAHEFGARALCVVTVSDHIRTGEKTTSDERQTTFNDMIVMTLDAAITL.

His-5 is a binding site for a purine D-ribonucleoside. Phosphate contacts are provided by residues Gly-21, Arg-25, Arg-44, and 88 to 91; that span reads RVGT. Residues 180–182 and 204–205 contribute to the a purine D-ribonucleoside site; these read EME and SD. The Proton donor role is filled by Asp-205.

The protein belongs to the PNP/UDP phosphorylase family. As to quaternary structure, homohexamer; trimer of homodimers.

It carries out the reaction a purine D-ribonucleoside + phosphate = a purine nucleobase + alpha-D-ribose 1-phosphate. The catalysed reaction is a purine 2'-deoxy-D-ribonucleoside + phosphate = a purine nucleobase + 2-deoxy-alpha-D-ribose 1-phosphate. Functionally, catalyzes the reversible phosphorolytic breakdown of the N-glycosidic bond in the beta-(deoxy)ribonucleoside molecules, with the formation of the corresponding free purine bases and pentose-1-phosphate. In Shewanella sp. (strain MR-4), this protein is Purine nucleoside phosphorylase DeoD-type.